We begin with the raw amino-acid sequence, 377 residues long: Beta sliding clamp (377 aa).

It belongs to the beta sliding clamp family. As to quaternary structure, forms a ring-shaped head-to-tail homodimer around DNA which binds and tethers DNA polymerases and other proteins to the DNA. The DNA replisome complex has a single clamp-loading complex (3 tau and 1 each of delta, delta', psi and chi subunits) which binds 3 Pol III cores (1 core on the leading strand and 2 on the lagging strand) each with a beta sliding clamp dimer. Additional proteins in the replisome are other copies of gamma, psi and chi, Ssb, DNA helicase and RNA primase.

It localises to the cytoplasm. Its function is as follows. Confers DNA tethering and processivity to DNA polymerases and other proteins. Acts as a clamp, forming a ring around DNA (a reaction catalyzed by the clamp-loading complex) which diffuses in an ATP-independent manner freely and bidirectionally along dsDNA. Initially characterized for its ability to contact the catalytic subunit of DNA polymerase III (Pol III), a complex, multichain enzyme responsible for most of the replicative synthesis in bacteria; Pol III exhibits 3'-5' exonuclease proofreading activity. The beta chain is required for initiation of replication as well as for processivity of DNA replication. The sequence is that of Beta sliding clamp (dnaN) from Staphylococcus aureus (strain COL).